The sequence spans 361 residues: Inner kinetochore subunit CNN1 (361 aa).

The interval 1-22 is disordered; sequence MSTPRKAAGNNENTEVSEIRTP. At Ser2 the chain carries Phosphoserine; by CDK1. Position 14 is a phosphothreonine; by CDK1 and MPS1 (Thr14). Position 17 is a phosphoserine; by CDK1 and MPS1 (Ser17). Thr21 and Thr42 each carry phosphothreonine; by CDK1. Ser50 is subject to Phosphoserine; by CDK1 and MPS1. Ser52 is subject to Phosphoserine; by CDK1. Thr53 is subject to Phosphothreonine; by MPS1. Ser55 is subject to Phosphoserine; by CDK1. The interval 60 to 84 is interacts with the NDC80 complex subunits SPC24 and SPC25 and with the KNL1 complex; that stretch reads NKDPNEVRSFLQDLSQVLARKSQGN. Ser74 is subject to Phosphoserine; by CDK1 and MPS1. 2 positions are modified to phosphothreonine; by MPS1: Thr86 and Thr88. Thr91 bears the Phosphothreonine; by CDK1 and MPS1 mark. The segment at 103–132 is disordered; that stretch reads EESQPEENELLRSRSEKLTDNNIGNETQPD. Residues 111-121 are compositionally biased toward basic and acidic residues; that stretch reads ELLRSRSEKLT. Position 115 is a phosphoserine; by CDK1 (Ser115). Positions 122–132 are enriched in polar residues; that stretch reads DNNIGNETQPD. At Thr129 the chain carries Phosphothreonine; by CDK1 and MPS1. Position 134 is a phosphothreonine; by MPS1 (Thr134). Residue Ser135 is modified to Phosphoserine; by MPS1. Phosphothreonine; by CDK1 and MPS1 is present on Thr139. A Phosphoserine; by MPS1 modification is found at Ser153. Residue Thr174 is modified to Phosphothreonine; by MPS1. Residue Ser177 is modified to Phosphoserine; by CDK1. At Thr191 the chain carries Phosphothreonine; by CDK1. Ser192 carries the post-translational modification Phosphoserine; by CDK1. A disordered region spans residues 193–255; that stretch reads PSIGMDQVDE…SDENLDDIGN (63 aa). The span at 219–254 shows a compositional bias: acidic residues; sequence PLSEDLPSDDKEETEEAENEDYSFENTSDENLDDIG. Ser268 bears the Phosphoserine; by CDK1 mark. Ser269 is modified (phosphoserine; by MPS1 and IPL1).

The protein belongs to the CENP-T/CNN1 family. In terms of assembly, component of the inner kinetochore constitutive centromere-associated network (CCAN) (also known as central kinetochore CTF19 complex in yeast), which is composed of at least AME1, CHL4, CNN1, CTF3, CTF19, IML3, MCM16, MCM21, MCM22, MHF1, MHF2, MIF2, NKP1, NKP2, OKP1 and WIP1. Interacts (via N-terminus) with the outer kinetochore NDC80 complex subunits SPC24 (via C-terminus) and SPC25 (via C-terminus); the interaction is direct and contributes to the correct spatiotemporal organization of the KMN network. Interacts with outer kinetochore MIS12 complex subunit NNF1. Interacts (via N-terminus) with the KNL1 complex. In terms of processing, phosphorylation of the C-terminus by MPS1 kinase regulates interaction with the outer kinetochore Ndc80 complex. Phosphorylation levels rise from S-phase and through metaphase, the protein is thendephosphorylated in anaphase.

It is found in the nucleus. The protein localises to the chromosome. The protein resides in the centromere. It localises to the kinetochore. Component of the kinetochore, a multiprotein complex that assembles on centromeric DNA and attaches chromosomes to spindle microtubules, mediating chromosome segregation and sister chromatid segregation during meiosis and mitosis. Component of the inner kinetochore constitutive centromere-associated network (CCAN), which serves as a structural platform for outer kinetochore assembly. Modulates outer kinetochore KMN network activity by regulating interactions within the network. This Saccharomyces cerevisiae (strain ATCC 204508 / S288c) (Baker's yeast) protein is Inner kinetochore subunit CNN1 (CNN1).